A 211-amino-acid chain; its full sequence is Thiamine-phosphate synthase (211 aa).

4-amino-2-methyl-5-(diphosphooxymethyl)pyrimidine-binding positions include 41–45 (QYRDK) and Asn73. Asp74 and Asp93 together coordinate Mg(2+). Thr112 lines the 4-amino-2-methyl-5-(diphosphooxymethyl)pyrimidine pocket. Residue 139–141 (SPT) coordinates 2-[(2R,5Z)-2-carboxy-4-methylthiazol-5(2H)-ylidene]ethyl phosphate. Position 142 (Lys142) interacts with 4-amino-2-methyl-5-(diphosphooxymethyl)pyrimidine. 2-[(2R,5Z)-2-carboxy-4-methylthiazol-5(2H)-ylidene]ethyl phosphate-binding positions include Gly169 and 189–190 (VS).

This sequence belongs to the thiamine-phosphate synthase family. Requires Mg(2+) as cofactor.

It catalyses the reaction 2-[(2R,5Z)-2-carboxy-4-methylthiazol-5(2H)-ylidene]ethyl phosphate + 4-amino-2-methyl-5-(diphosphooxymethyl)pyrimidine + 2 H(+) = thiamine phosphate + CO2 + diphosphate. It carries out the reaction 2-(2-carboxy-4-methylthiazol-5-yl)ethyl phosphate + 4-amino-2-methyl-5-(diphosphooxymethyl)pyrimidine + 2 H(+) = thiamine phosphate + CO2 + diphosphate. The catalysed reaction is 4-methyl-5-(2-phosphooxyethyl)-thiazole + 4-amino-2-methyl-5-(diphosphooxymethyl)pyrimidine + H(+) = thiamine phosphate + diphosphate. Its pathway is cofactor biosynthesis; thiamine diphosphate biosynthesis; thiamine phosphate from 4-amino-2-methyl-5-diphosphomethylpyrimidine and 4-methyl-5-(2-phosphoethyl)-thiazole: step 1/1. Functionally, condenses 4-methyl-5-(beta-hydroxyethyl)thiazole monophosphate (THZ-P) and 2-methyl-4-amino-5-hydroxymethyl pyrimidine pyrophosphate (HMP-PP) to form thiamine monophosphate (TMP). The polypeptide is Thiamine-phosphate synthase (Thioalkalivibrio sulfidiphilus (strain HL-EbGR7)).